Here is a 291-residue protein sequence, read N- to C-terminus: Pituitary-specific positive transcription factor 1 (291 aa).

Positions 5–13 (PFTSADTFI) match the 9aaTAD motif. In terms of domain architecture, POU-specific spans 124-198 (MDSPEIRELE…ILSKWLEEAE (75 aa)). The homeobox DNA-binding region spans 214–273 (KRKRRTTISIAAKDALERHFGEQNKPSSQEILRMAEELNLEKEVVRVWFCNRRQREKRVK).

The protein belongs to the POU transcription factor family. Class-1 subfamily. Interacts with PITX1. Interacts with LHX3. Interacts with ELK1.

Its subcellular location is the nucleus. Functionally, transcription factor involved in the specification of the lactotrope, somatotrope, and thyrotrope phenotypes in the developing anterior pituitary. Activates growth hormone and prolactin genes. Specifically binds to the consensus sequence 5'-TAAAT-3'. The chain is Pituitary-specific positive transcription factor 1 (POU1F1) from Sus scrofa (Pig).